Here is a 141-residue protein sequence, read N- to C-terminus: Nucleoside diphosphate kinase (141 aa).

Residues Lys11, Phe59, Arg87, Thr93, Arg104, and Asn114 each coordinate ATP. His117 serves as the catalytic Pros-phosphohistidine intermediate.

Belongs to the NDK family. In terms of assembly, homotetramer. It depends on Mg(2+) as a cofactor.

The protein localises to the cytoplasm. It carries out the reaction a 2'-deoxyribonucleoside 5'-diphosphate + ATP = a 2'-deoxyribonucleoside 5'-triphosphate + ADP. It catalyses the reaction a ribonucleoside 5'-diphosphate + ATP = a ribonucleoside 5'-triphosphate + ADP. Major role in the synthesis of nucleoside triphosphates other than ATP. The ATP gamma phosphate is transferred to the NDP beta phosphate via a ping-pong mechanism, using a phosphorylated active-site intermediate. The chain is Nucleoside diphosphate kinase from Hamiltonella defensa subsp. Acyrthosiphon pisum (strain 5AT).